Consider the following 943-residue polypeptide: Leucine--tRNA ligase (943 aa).

A 'HIGH' region motif is present at residues 36-46 (PYPSGSMHVGH). Positions 623–627 (KMSSS) match the 'KMSKS' region motif. Residues 910 to 943 (ASEVVIHTDPEEAPGPEDRKAGARPLRPGIWLEE) are disordered. Over residues 915–930 (IHTDPEEAPGPEDRKA) the composition is skewed to basic and acidic residues.

Belongs to the class-I aminoacyl-tRNA synthetase family.

The protein resides in the cytoplasm. It catalyses the reaction tRNA(Leu) + L-leucine + ATP = L-leucyl-tRNA(Leu) + AMP + diphosphate. This Methanopyrus kandleri (strain AV19 / DSM 6324 / JCM 9639 / NBRC 100938) protein is Leucine--tRNA ligase.